Consider the following 147-residue polypeptide: Large ribosomal subunit protein bL9 (147 aa).

Belongs to the bacterial ribosomal protein bL9 family.

Functionally, binds to the 23S rRNA. The polypeptide is Large ribosomal subunit protein bL9 (Halalkalibacterium halodurans (strain ATCC BAA-125 / DSM 18197 / FERM 7344 / JCM 9153 / C-125) (Bacillus halodurans)).